We begin with the raw amino-acid sequence, 196 residues long: 3-dehydroquinate dehydratase (196 aa).

Residues E23–R25 and R45 contribute to the 3-dehydroquinate site. Catalysis depends on H98, which acts as the Proton donor/acceptor. K122 (schiff-base intermediate with substrate) is an active-site residue. The 3-dehydroquinate site is built by R159 and Q182.

This sequence belongs to the type-I 3-dehydroquinase family. Homodimer.

The catalysed reaction is 3-dehydroquinate = 3-dehydroshikimate + H2O. It participates in metabolic intermediate biosynthesis; chorismate biosynthesis; chorismate from D-erythrose 4-phosphate and phosphoenolpyruvate: step 3/7. Functionally, involved in the third step of the chorismate pathway, which leads to the biosynthesis of aromatic amino acids. Catalyzes the cis-dehydration of 3-dehydroquinate (DHQ) and introduces the first double bond of the aromatic ring to yield 3-dehydroshikimate. This Archaeoglobus fulgidus (strain ATCC 49558 / DSM 4304 / JCM 9628 / NBRC 100126 / VC-16) protein is 3-dehydroquinate dehydratase.